The chain runs to 648 residues: Macrolide export ATP-binding/permease protein MacB (648 aa).

Over 1-272 (MTPLLELKDI…RALAANKMRT (272 aa)) the chain is Cytoplasmic. In terms of domain architecture, ABC transporter spans 5 to 243 (LELKDIRRSY…TGGTEPVVNT (239 aa)). Position 41-48 (41-48 (GASGSGKS)) interacts with ATP. A helical transmembrane segment spans residues 273-293 (LLTMLGIIIGIASVVSIVVVG). The Periplasmic segment spans residues 294–522 (DAAKQMVLAD…TVEKTTRTLQ (229 aa)). Residues 523-543 (LFLTLVAVISLVVGGIGVMNI) form a helical membrane-spanning segment. At 544 to 575 (MLVSVTERTREIGIRMAVGARASDVLQQFLIE) the chain is on the cytoplasmic side. A helical membrane pass occupies residues 576–596 (AVLVCLVGGALGITLSLLIAF). Topologically, residues 597-610 (TLQLFLPGWEIGFS) are periplasmic. A helical membrane pass occupies residues 611–631 (PLALLLAFLCSTVTGILFGWL). Topologically, residues 632 to 648 (PARNAARLDPVDALARE) are cytoplasmic.

This sequence belongs to the ABC transporter superfamily. Macrolide exporter (TC 3.A.1.122) family. As to quaternary structure, homodimer. Part of the tripartite efflux system MacAB-TolC, which is composed of an inner membrane transporter, MacB, a periplasmic membrane fusion protein, MacA, and an outer membrane component, TolC. The complex forms a large protein conduit and can translocate molecules across both the inner and outer membranes. Interacts with MacA.

The protein resides in the cell inner membrane. Its activity is regulated as follows. ATPase activity is stimulated by interaction with MacA and inhibited by vanadate. Functionally, part of the tripartite efflux system MacAB-TolC. MacB is a non-canonical ABC transporter that contains transmembrane domains (TMD), which form a pore in the inner membrane, and an ATP-binding domain (NBD), which is responsible for energy generation. When overexpressed, the system confers resistance against macrolides composed of 14- and 15-membered lactones but no or weak resistance against 16-membered ones. In addition, the system could also transport R-LPS or a similar glycolipid. The protein is Macrolide export ATP-binding/permease protein MacB of Escherichia coli (strain K12).